Here is a 145-residue protein sequence, read N- to C-terminus: Probable flagellum biosynthesis repressor protein FlbT (145 aa).

Belongs to the FlbT family.

In terms of biological role, has a post-transcriptional repressor function in flagellum biogenesis. Associates with the 5'-UTR of fljK mRNA and promotes its degradation. This chain is Probable flagellum biosynthesis repressor protein FlbT, found in Chelativorans sp. (strain BNC1).